Reading from the N-terminus, the 94-residue chain is Co-chaperonin GroES (94 aa).

Belongs to the GroES chaperonin family. In terms of assembly, heptamer of 7 subunits arranged in a ring. Interacts with the chaperonin GroEL.

It is found in the cytoplasm. Functionally, together with the chaperonin GroEL, plays an essential role in assisting protein folding. The GroEL-GroES system forms a nano-cage that allows encapsulation of the non-native substrate proteins and provides a physical environment optimized to promote and accelerate protein folding. GroES binds to the apical surface of the GroEL ring, thereby capping the opening of the GroEL channel. This chain is Co-chaperonin GroES, found in Clostridioides difficile (Peptoclostridium difficile).